Here is a 231-residue protein sequence, read N- to C-terminus: Class II histocompatibility antigen, B-L beta chain (231 aa).

Residues 1–89 (FFQWSATVEC…IVAPLTLQRR (89 aa)) form a beta-1 region. The Extracellular segment spans residues 1–194 (FFQWSATVEC…PGDVSRSKLL (194 aa)). Cystine bridges form between cysteine 10–cysteine 74 and cysteine 111–cysteine 167. N-linked (GlcNAc...) asparagine glycosylation occurs at asparagine 14. Residues 90-182 (EPKVRIFALQ…SLQQPITQRW (93 aa)) form a beta-2 region. Residues 91 to 179 (PKVRIFALQS…EHTSLQQPIT (89 aa)) form the Ig-like C1-type domain. Residues 183–194 (EPPGDVSRSKLL) form a connecting peptide region. The helical transmembrane segment at 195–219 (MGVGGFVLGLVYLALGIFFFLCSKK) threads the bilayer. The Cytoplasmic segment spans residues 220 to 231 (GQPDPTSPGILN).

Belongs to the MHC class II family.

It is found in the membrane. In Gallus gallus (Chicken), this protein is Class II histocompatibility antigen, B-L beta chain.